We begin with the raw amino-acid sequence, 689 residues long: Glycine--tRNA ligase beta subunit (689 aa).

This sequence belongs to the class-II aminoacyl-tRNA synthetase family. As to quaternary structure, tetramer of two alpha and two beta subunits.

It localises to the cytoplasm. The catalysed reaction is tRNA(Gly) + glycine + ATP = glycyl-tRNA(Gly) + AMP + diphosphate. The chain is Glycine--tRNA ligase beta subunit from Salmonella schwarzengrund (strain CVM19633).